A 293-amino-acid polypeptide reads, in one-letter code: Acetyl-coenzyme A carboxylase carboxyl transferase subunit beta (293 aa).

Residues 29–293 (LWVKCSECSQ…GVKELAEANT (265 aa)) form the CoA carboxyltransferase N-terminal domain. C33, C36, C52, and C55 together coordinate Zn(2+). The C4-type zinc-finger motif lies at 33 to 55 (CSECSQVAYRKDLISNFNVCNNC).

The protein belongs to the AccD/PCCB family. As to quaternary structure, acetyl-CoA carboxylase is a heterohexamer composed of biotin carboxyl carrier protein (AccB), biotin carboxylase (AccC) and two subunits each of ACCase subunit alpha (AccA) and ACCase subunit beta (AccD). The cofactor is Zn(2+).

It is found in the cytoplasm. The enzyme catalyses N(6)-carboxybiotinyl-L-lysyl-[protein] + acetyl-CoA = N(6)-biotinyl-L-lysyl-[protein] + malonyl-CoA. The protein operates within lipid metabolism; malonyl-CoA biosynthesis; malonyl-CoA from acetyl-CoA: step 1/1. Component of the acetyl coenzyme A carboxylase (ACC) complex. Biotin carboxylase (BC) catalyzes the carboxylation of biotin on its carrier protein (BCCP) and then the CO(2) group is transferred by the transcarboxylase to acetyl-CoA to form malonyl-CoA. The polypeptide is Acetyl-coenzyme A carboxylase carboxyl transferase subunit beta (Prochlorococcus marinus (strain AS9601)).